A 176-amino-acid polypeptide reads, in one-letter code: Mitochondrial inner membrane protein Mpv17 (176 aa).

4 helical membrane passes run 18–38 (VQVL…QQLV), 57–77 (LGCG…DHLI), 94–114 (GGFA…LNGM), and 131–151 (LITN…LVPL).

Belongs to the peroxisomal membrane protein PXMP2/4 family.

Its subcellular location is the mitochondrion inner membrane. Non-selective channel that modulates the membrane potential under normal conditions and oxidative stress, and is involved in mitochondrial homeostasis. Involved in mitochondrial deoxynucleoside triphosphates (dNTP) pool homeostasis and mitochondrial DNA (mtDNA) maintenance. May be involved in the regulation of reactive oxygen species metabolism and the control of oxidative phosphorylation. This chain is Mitochondrial inner membrane protein Mpv17, found in Rattus norvegicus (Rat).